We begin with the raw amino-acid sequence, 603 residues long: NADH-ubiquinone oxidoreductase chain 5 (603 aa).

Helical transmembrane passes span 4-24 (FTTMTALTLTSLIPPITATLI), 38-58 (TAIASAFTISLIPTTMFICLG), 89-109 (FLPVALFVTWSIMEFSLWYMA), 122-142 (LIFLITMIILITANNLLQLFI), 171-191 (AILYNRIGDIGFILTLAWFLL), 211-233 (LPLLGLLLAAAGKSAQLGLHPWL), 241-261 (TPVSALLHSSTMVVAGIFLLI), 273-293 (IQTLALCLGAITTLFAAICAL), 301-320 (IVAFSTSSQLGLMMVTIGIN), 325-347 (AFLHICTHAFFKALLFMCSGSII), 366-386 (MPLTSTSLTISSLALAGMPFL), 405-424 (NAWALSITLIATSLTSAYST), 457-477 (LMTGSLFTGFLITSNIPPTSL), 488-508 (LAALTATLLGLLVALDLNYLA), 537-557 (IPHLSLLMSQNLSLLLLDLTW), and 582-602 (GMIKLYFLSFLIPLLLTLLMI).

The protein belongs to the complex I subunit 5 family. In terms of assembly, core subunit of respiratory chain NADH dehydrogenase (Complex I) which is composed of 45 different subunits.

Its subcellular location is the mitochondrion inner membrane. The catalysed reaction is a ubiquinone + NADH + 5 H(+)(in) = a ubiquinol + NAD(+) + 4 H(+)(out). In terms of biological role, core subunit of the mitochondrial membrane respiratory chain NADH dehydrogenase (Complex I) which catalyzes electron transfer from NADH through the respiratory chain, using ubiquinone as an electron acceptor. Essential for the catalytic activity and assembly of complex I. This Pongo pygmaeus (Bornean orangutan) protein is NADH-ubiquinone oxidoreductase chain 5 (MT-ND5).